A 371-amino-acid polypeptide reads, in one-letter code: MSKVCRDLRIYLRLLHIMGMMCWHFDSDHCQLVATSGSERYAVVYAGCILVSTTAGFIFALLHPSRFHIAIYNQTGNFYEAVIFRSTCVVLFLVYVILYAWRHRYRDLVQHILRLNRRCASSCTNQQFLHNIILYGMLTILCFGNYLHGYTRAGLATLPLALCMLVYIFAFLVLCLLLMFFVSLKQVMTAGLIHYNQQLCQGDLISGLRGRQQILKLCGGELNECFGLLMLPIVALVLLMAPSGPFFLISTVLEGKFRPDECLIMLLTSSTWDTPWMIMLVLMLRTNGISEEANKTAKMLTKVPRTGTGLDRMIEKFLLKNLRQKPILTAYGFFALDKSTLFKLFTAIFTYMVILVQFKEMENSTKSINKF.

The Cytoplasmic portion of the chain corresponds to 1–41; the sequence is MSKVCRDLRIYLRLLHIMGMMCWHFDSDHCQLVATSGSERY. Residues 42-62 form a helical membrane-spanning segment; the sequence is AVVYAGCILVSTTAGFIFALL. The Extracellular segment spans residues 63–80; it reads HPSRFHIAIYNQTGNFYE. The N-linked (GlcNAc...) asparagine glycan is linked to asparagine 73. The helical transmembrane segment at 81–101 threads the bilayer; it reads AVIFRSTCVVLFLVYVILYAW. The Cytoplasmic segment spans residues 102–127; sequence RHRYRDLVQHILRLNRRCASSCTNQQ. A helical membrane pass occupies residues 128–148; it reads FLHNIILYGMLTILCFGNYLH. Over 149 to 161 the chain is Extracellular; the sequence is GYTRAGLATLPLA. A helical membrane pass occupies residues 162–182; sequence LCMLVYIFAFLVLCLLLMFFV. The Cytoplasmic segment spans residues 183–228; sequence SLKQVMTAGLIHYNQQLCQGDLISGLRGRQQILKLCGGELNECFGL. Residues 229 to 249 form a helical membrane-spanning segment; it reads LMLPIVALVLLMAPSGPFFLI. Residues 250 to 263 lie on the Extracellular side of the membrane; the sequence is STVLEGKFRPDECL. Residues 264-284 form a helical membrane-spanning segment; the sequence is IMLLTSSTWDTPWMIMLVLML. Residues 285–340 are Cytoplasmic-facing; the sequence is RTNGISEEANKTAKMLTKVPRTGTGLDRMIEKFLLKNLRQKPILTAYGFFALDKST. The helical transmembrane segment at 341 to 361 threads the bilayer; the sequence is LFKLFTAIFTYMVILVQFKEM. Residues 362–371 are Extracellular-facing; that stretch reads ENSTKSINKF. An N-linked (GlcNAc...) asparagine glycan is attached at asparagine 363.

The protein belongs to the insect chemoreceptor superfamily. Gustatory receptor (GR) family. Gr21a subfamily. Expressed in the adult labellar chemosensory neurons, and adult thorax and wing. In larvae, is expressed in neurons of the posterior pharyngeal sense organ.

It is found in the cell membrane. Gustatory receptor which mediates acceptance or avoidance behavior, depending on its substrates. Plays a role in sustaining courtship behavior in males, possibly through the reception of a stimulating arrestant pheromone. This is Gustatory and pheromone receptor 39a, isoform A (Gr39a) from Drosophila melanogaster (Fruit fly).